Here is a 468-residue protein sequence, read N- to C-terminus: Probable protein phosphatase 2C 52 (468 aa).

In terms of domain architecture, PPM-type phosphatase spans 67–372; it reads SSCIFTQQGR…DDCAVVCLFL (306 aa). Mn(2+)-binding residues include D102, G103, D317, and D363. Residues 413-429 are compositionally biased toward polar residues; it reads RSSSDQENETYGNVNTE. Residues 413–442 form a disordered region; the sequence is RSSSDQENETYGNVNTETDAEDEKTVGDQN.

Belongs to the PP2C family. Requires Mg(2+) as cofactor. The cofactor is Mn(2+).

It catalyses the reaction O-phospho-L-seryl-[protein] + H2O = L-seryl-[protein] + phosphate. The enzyme catalyses O-phospho-L-threonyl-[protein] + H2O = L-threonyl-[protein] + phosphate. This Arabidopsis thaliana (Mouse-ear cress) protein is Probable protein phosphatase 2C 52.